Here is a 1213-residue protein sequence, read N- to C-terminus: MGKNREMRLTHICCCCLLYQLGFLSNGIVSELQFAPDREEWEVVFPALWRREPVDPAGGSGGSADPGWVRGVGGGGSARAQAAGSSREVRSVAPVPLEEPVEGRSESRLRPPPPSEGEEDEELESQELPRGSSGAAALSPGAPASWQPPPPPQPPPSPPPAQHAEPDGDEVLLRIPAFSRDLYLLLRRDGRFLAPRFAVEQRPNPGPGPTGAASAPQPPAPPDAGCFYTGAVLRHPGSLASFSTCGGGLMGFIQLNEDFIFIEPLNDTMAITGHPHRVYRQKRSMEEKVTEKSALHSHYCGIISDKGRPRSRKIAESGRGKRYSYKLPQEYNIETVVVADPAMVSYHGADAARRFILTILNMVFNLFQHKSLSVQVNLRVIKLILLHETPPELYIGHHGEKMLESFCKWQHEEFGKKNDIHLEMSTNWGEDMTSVDAAILITRKDFCVHKDEPCDTVGIAYLSGMCSEKRKCIIAEDNGLNLAFTIAHEMGHNMGINHDNDHPSCADGLHIMSGEWIKGQNLGDVSWSRCSKEDLERFLRSKASNCLLQTNPQSVNSVMVPSKLPGMTYTADEQCQILFGPLASFCQEMQHVICTGLWCKVEGEKECRTKLDPPMDGTDCDLGKWCKAGECTSRTSAPEHLAGEWSLWSPCSRTCSAGISSRERKCPGLDSEARDCNGPRKQYRICENPPCPAGLPGFRDWQCQAYSVRTSSPKHILQWQAVLDEEKPCALFCSPVGKEQPILLSEKVMDGTSCGYQGLDICANGRCQKVGCDGLLGSLAREDHCGVCNGNGKSCKIIKGDFNHTRGAGYVEVLVIPAGARRIKVVEEKPAHSYLALRDAGKQSINSDWKIEHSGAFNLAGTTVHYVRRGLWEKISAKGPTTAPLHLLVLLFQDQNYGLHYEYTIPSDPLPENQSSKAPEPLFMWTHTSWEDCDATCGGGERKTTVSCTKIMSKNISIVDNEKCKYLTKPEPQIRKCNEQPCQTRWMMTEWTPCSRTCGKGMQSRQVACTQQLSNGTLIRARERDCIGPKPASAQRCEGQDCMTVWEAGVWSECSVKCGKGIRHRTVRCTNPRKKCVLSTRPREAEDCEDYSKCYVWRMGDWSKCSITCGKGMQSRVIQCMHKITGRHGNECFSSEKPAAYRPCHLQPCNEKINVNTITSPRLAALTFKCLGDQWPVYCRVIREKNLCQDMRWYQRCCETCRDFYAQKLQQKS.

An N-terminal signal peptide occupies residues 1–27; it reads MGKNREMRLTHICCCCLLYQLGFLSNG. Residues 28–322 constitute a propeptide that is removed on maturation; sequence IVSELQFAPD…KIAESGRGKR (295 aa). 2 disordered regions span residues 49–161 and 192–215; these read WRRE…PPPA and FLAPRFAVEQRPNPGPGPTGAASA. Gly residues predominate over residues 52–71; sequence EPVDPAGGSGGSADPGWVRG. The segment covering 110 to 119 has biased composition (acidic residues); that stretch reads RPPPPSEGEE. Over residues 120 to 139 the composition is skewed to low complexity; the sequence is DEELESQELPRGSSGAAALS. Over residues 140–155 the composition is skewed to pro residues; the sequence is PGAPASWQPPPPPQPP. Residue N266 is glycosylated (N-linked (GlcNAc...) asparagine). The Cysteine switch signature appears at 298–305; that stretch reads HYCGIISD. Residue C300 participates in Zn(2+) binding. One can recognise a Peptidase M12B domain in the interval 331–551; it reads YNIETVVVAD…KASNCLLQTN (221 aa). Intrachain disulfides connect C407–C472, C447–C454, C466–C546, C505–C530, C575–C599, C586–C607, C594–C626, C620–C631, C651–C686, C655–C691, and C666–C676. A Zn(2+)-binding site is contributed by H488. Residue E489 is part of the active site. H492 and H498 together coordinate Zn(2+). A Disintegrin domain is found at 552 to 639; that stretch reads PQSVNSVMVP…ECTSRTSAPE (88 aa). Positions 640–692 constitute a TSP type-1 1 domain; sequence HLAGEWSLWSPCSRTCSAGISSRERKCPGLDSEARDCNGPRKQYRICENPPCP. The interval 797–920 is spacer; the sequence is IIKGDFNHTR…PENQSSKAPE (124 aa). 4 N-linked (GlcNAc...) asparagine glycosylation sites follow: N803, N913, N955, and N1015. 4 TSP type-1 domains span residues 921-981, 982-1043, 1045-1089, and 1093-1150; these read PLFM…NEQP, CQTR…QDCM, VWEA…EDCE, and KCYV…QPCN. Intrachain disulfides connect C994-C1037, C998-C1042, and C1009-C1026. The 40-residue stretch at 1166–1205 folds into the PLAC domain; the sequence is LTFKCLGDQWPVYCRVIREKNLCQDMRWYQRCCETCRDFY.

Requires Zn(2+) as cofactor. In terms of processing, the precursor is cleaved by a furin endopeptidase. Glycosylated. Can be O-fucosylated by POFUT2 on a serine or a threonine residue found within the consensus sequence C1-X(2)-(S/T)-C2-G of the TSP type-1 repeat domains where C1 and C2 are the first and second cysteine residue of the repeat, respectively. Fucosylated repeats can then be further glycosylated by the addition of a beta-1,3-glucose residue by the glucosyltransferase, B3GALTL. Fucosylation mediates the efficient secretion of ADAMTS family members. Can also be C-glycosylated with one or two mannose molecules on tryptophan residues within the consensus sequence W-X-X-W of the TPRs, and N-glycosylated. These other glycosylations can also facilitate secretion. Expressed in fetal lung, but not in any adult tissues examined. Expression was detected in an osteosarcoma cDNA library.

It is found in the secreted. The protein localises to the extracellular space. It localises to the extracellular matrix. The protein is A disintegrin and metalloproteinase with thrombospondin motifs 19 (ADAMTS19) of Homo sapiens (Human).